We begin with the raw amino-acid sequence, 417 residues long: RH-like protein (417 aa).

The next 11 helical transmembrane spans lie at 12–32 (CLPL…FFFT), 44–64 (LVAS…GLGF), 77–97 (VAFN…LDGF), 125–145 (ISMN…MELV), 172–192 (IHVF…KPLP), 203–223 (TSPS…WPTF), 238–258 (VFST…VSSL), 265–285 (INMT…SASC), 287–307 (VIHS…ISIG), 331–351 (TFGL…ALRV), and 358–378 (MIGF…AMSI).

Belongs to the ammonium transporter (TC 2.A.49) family. Rh subfamily.

Its subcellular location is the membrane. Functionally, may be part of an oligomeric complex which is likely to have a transport or channel function in the erythrocyte membrane. The chain is RH-like protein from Macaca mulatta (Rhesus macaque).